Reading from the N-terminus, the 499-residue chain is Glycerol kinase (499 aa).

Residue Thr-11 participates in ADP binding. Positions 11, 12, and 13 each coordinate ATP. Thr-11 provides a ligand contact to sn-glycerol 3-phosphate. Position 15 (Arg-15) interacts with ADP. 4 residues coordinate sn-glycerol 3-phosphate: Arg-81, Glu-82, Tyr-133, and Asp-242. 5 residues coordinate glycerol: Arg-81, Glu-82, Tyr-133, Asp-242, and Gln-243. ADP contacts are provided by Thr-264 and Gly-309. Residues Thr-264, Gly-309, Gln-313, and Gly-414 each coordinate ATP. Gly-414 and Asn-418 together coordinate ADP.

It belongs to the FGGY kinase family.

The catalysed reaction is glycerol + ATP = sn-glycerol 3-phosphate + ADP + H(+). It participates in polyol metabolism; glycerol degradation via glycerol kinase pathway; sn-glycerol 3-phosphate from glycerol: step 1/1. Inhibited by fructose 1,6-bisphosphate (FBP). In terms of biological role, key enzyme in the regulation of glycerol uptake and metabolism. Catalyzes the phosphorylation of glycerol to yield sn-glycerol 3-phosphate. The protein is Glycerol kinase of Methylibium petroleiphilum (strain ATCC BAA-1232 / LMG 22953 / PM1).